We begin with the raw amino-acid sequence, 327 residues long: MSTVVEKSGEAKPGKVEVGVKLRGAEKVARIPVKIIPTEELPKKPDWIRVRIPVSPEVDRIKQLLRKHKLHSVCEEASCPNLGECFSGGTATFMIMGDICTRRCPFCDVGHGRPKPLDVDEPTNLAIAIADLRLKYVVITSVDRDDLRDGGAQHFADCLREIRKLSPGIQLETLVPDYRGRMDIALEITANEPPDVFNHNLETVPRLYRSSRPGSDFEWSLDLLQKFKQMVPHVPTKSGLMLGLGETDEEVIEVMQRMREHDIDMLTLGQYLQPSRNHLPVQRFVHPDTFAWFAEEGERMGFKNVASGPLVRSSYHADQQAHGNKIG.

Residues C74, C79, C85, C100, C104, C107, and S314 each coordinate [4Fe-4S] cluster. The Radical SAM core domain maps to 86 to 303 (FSGGTATFMI…AEEGERMGFK (218 aa)).

This sequence belongs to the radical SAM superfamily. Lipoyl synthase family. [4Fe-4S] cluster serves as cofactor.

It is found in the cytoplasm. It carries out the reaction [[Fe-S] cluster scaffold protein carrying a second [4Fe-4S](2+) cluster] + N(6)-octanoyl-L-lysyl-[protein] + 2 oxidized [2Fe-2S]-[ferredoxin] + 2 S-adenosyl-L-methionine + 4 H(+) = [[Fe-S] cluster scaffold protein] + N(6)-[(R)-dihydrolipoyl]-L-lysyl-[protein] + 4 Fe(3+) + 2 hydrogen sulfide + 2 5'-deoxyadenosine + 2 L-methionine + 2 reduced [2Fe-2S]-[ferredoxin]. Its pathway is protein modification; protein lipoylation via endogenous pathway; protein N(6)-(lipoyl)lysine from octanoyl-[acyl-carrier-protein]: step 2/2. Functionally, catalyzes the radical-mediated insertion of two sulfur atoms into the C-6 and C-8 positions of the octanoyl moiety bound to the lipoyl domains of lipoate-dependent enzymes, thereby converting the octanoylated domains into lipoylated derivatives. The chain is Lipoyl synthase from Pseudomonas paraeruginosa (strain DSM 24068 / PA7) (Pseudomonas aeruginosa (strain PA7)).